The primary structure comprises 129 residues: Large-conductance mechanosensitive channel (129 aa).

The next 3 helical transmembrane spans lie at 8-28, 30-50, and 67-87; these read FIMR…AAFT, IVKS…AGAV, and GAVL…FLII.

Belongs to the MscL family. In terms of assembly, homopentamer.

The protein resides in the cell membrane. Channel that opens in response to stretch forces in the membrane lipid bilayer. May participate in the regulation of osmotic pressure changes within the cell. The protein is Large-conductance mechanosensitive channel of Oenococcus oeni (strain ATCC BAA-331 / PSU-1).